The following is a 393-amino-acid chain: CAI-1 autoinducer synthase (393 aa).

The residue at position 240 (Lys-240) is an N6-(pyridoxal phosphate)lysine.

Belongs to the class-II pyridoxal-phosphate-dependent aminotransferase family. It depends on pyridoxal 5'-phosphate as a cofactor.

Functionally, required for the synthesis of the quorum-sensing autoinducer CAI-1 ((S)-3-hydroxytridecan-4-one) which probably functions as an intragenus signal. The sequence is that of CAI-1 autoinducer synthase (cqsA) from Vibrio campbellii (strain ATCC BAA-1116).